The following is a 563-amino-acid chain: Portal protein (563 aa).

The protein belongs to the herpesviridae portal protein family. In terms of assembly, homododecamerizes. Interacts with terminase subunits TRM1 and TRM3.

The protein resides in the virion. Its subcellular location is the host nucleus. Functionally, forms a portal in the viral capsid through which viral DNA is translocated during DNA packaging. Assembles as a dodecamer at a single fivefold axe of the T=16 icosahedric capsid. Binds to the molecular motor that translocates the viral DNA, termed terminase. The protein is Portal protein (43) of Saimiri sciureus (Common squirrel monkey).